The chain runs to 554 residues: Thermosome subunit alpha (554 aa).

Residues 530 to 554 are disordered; that stretch reads PKKKEKKGKTGEEEEEEGGGSKFEF.

It belongs to the TCP-1 chaperonin family. As to quaternary structure, forms a Heterooligomeric complex of two stacked eight-membered rings.

In terms of biological role, molecular chaperone; binds unfolded polypeptides in vitro, and has a weak ATPase activity. This Aeropyrum pernix (strain ATCC 700893 / DSM 11879 / JCM 9820 / NBRC 100138 / K1) protein is Thermosome subunit alpha (thsA).